Reading from the N-terminus, the 361-residue chain is Divinyl chlorophyll a/b light-harvesting protein PcbE (361 aa).

6 helical membrane passes run 27 to 47 (FIGS…ANTL), 88 to 108 (VAFV…AGLL), 149 to 169 (FILG…VEWA), 210 to 230 (VMGG…FHIA), 250 to 270 (AVLS…AFWC), and 315 to 335 (LSNV…WHAI).

It belongs to the PsbB/PsbC family. IsiA/Pcb subfamily. The antenna complex consists of divinyl chlorophylls (a and b) and divinyl chlorophyll a/b binding proteins and binds more divinyl chlorophyll b than does the antenna complex from high-light-adapted Prochlorococcus. Requires divinyl chlorophyll a as cofactor. The cofactor is divinyl chlorophyll b.

The protein resides in the cellular thylakoid membrane. In terms of biological role, the antenna complex functions as a light receptor, it captures and delivers excitation energy to photosystems II and I. The Prochlorales pcb genes are not related to higher plant LHCs. The chain is Divinyl chlorophyll a/b light-harvesting protein PcbE (pcbE) from Prochlorococcus marinus (strain SARG / CCMP1375 / SS120).